Consider the following 295-residue polypeptide: G1/S-specific cyclin-D1 (295 aa).

A Cyclin N-terminal domain is found at Leu-28 to Leu-152. Residues Gln-264–Ile-295 are disordered. A Glycyl lysine isopeptide (Lys-Gly) (interchain with G-Cter in ubiquitin) cross-link involves residue Lys-270. Residues Glu-273–Asp-282 show a composition bias toward acidic residues. At Thr-286 the chain carries Phosphothreonine.

It belongs to the cyclin family. Cyclin D subfamily. In terms of assembly, interacts with either CDK4 or CDK6 protein kinase to form a serine/threonine kinase holoenzyme complex. The cyclin subunit imparts substrate specificity to the complex. Component of the ternary complex CCND1/CDK4/CDKN1B required for nuclear translocation and modulation of CDK4-mediated kinase activity. Interacts directly with CDKN1B. Can form similar complexes with either CDKN1A or CDKN2A. Interacts with UHRF2; the interaction ubiquitinates CCND1 and appears to occur independently of phosphorylation. Interacts with USP2. Interacts (via cyclin N-terminal domain) with INSM1 (via N-terminal region); the interaction competes with the binding of CCND1 to CDK4 during cell cycle progression and inhibits CDK4 activity. Interacts with CDK4; the interaction is prevented with the binding of CCND1 to INSM1 during cell cycle progression. Post-translationally, phosphorylation at Thr-286 by MAP kinases is required for ubiquitination and degradation by the DCX(AMBRA1) complex. It also plays an essential role for recognition by the FBXO31 component of SCF (SKP1-cullin-F-box) protein ligase complex following DNA damage. In terms of processing, ubiquitinated at Lys-270 by the DCX(AMBRA1) complex during the transition from G1 to S cell phase, leading to its degradation: ubiquitination is dependent on Thr-286 phosphorylation. The DCX(AMBRA1) complex represents the major regulator of CCND1 stability during the G1/S transition. Also ubiquitinated by the SCF(FBXO4) and Cul7-RING(FBXW8) ubiquitin-protein ligase complexes. Following DNA damage it is ubiquitinated by the SCF(FBXO31) protein ligase complex. SCF(FBXO31) ubiquitination is dependent on Thr-286 phosphorylation. Ubiquitinated also by UHRF2 apparently in a phosphorylation-independent manner. Ubiquitination leads to its degradation and G1 arrest. Deubiquitinated by USP2; leading to its stabilization.

The protein resides in the nucleus. The protein localises to the cytoplasm. It is found in the nucleus membrane. In terms of biological role, regulatory component of the cyclin D1-CDK4 (DC) complex that phosphorylates and inhibits members of the retinoblastoma (RB) protein family including RB1 and regulates the cell-cycle during G(1)/S transition. Phosphorylation of RB1 allows dissociation of the transcription factor E2F from the RB/E2F complex and the subsequent transcription of E2F target genes which are responsible for the progression through the G(1) phase. Hypophosphorylates RB1 in early G(1) phase. Cyclin D-CDK4 complexes are major integrators of various mitogenenic and antimitogenic signals. Also a substrate for SMAD3, phosphorylating SMAD3 in a cell-cycle-dependent manner and repressing its transcriptional activity. Component of the ternary complex, cyclin D1/CDK4/CDKN1B, required for nuclear translocation and activity of the cyclin D-CDK4 complex. Exhibits transcriptional corepressor activity with INSM1 on the NEUROD1 and INS promoters in a cell cycle-independent manner. This chain is G1/S-specific cyclin-D1 (CCND1), found in Bos taurus (Bovine).